A 192-amino-acid chain; its full sequence is Crossover junction endodeoxyribonuclease RuvC (192 aa).

Residues aspartate 8, glutamate 67, and aspartate 139 contribute to the active site. Residues aspartate 8, glutamate 67, and aspartate 139 each contribute to the Mg(2+) site.

Belongs to the RuvC family. As to quaternary structure, homodimer which binds Holliday junction (HJ) DNA. The HJ becomes 2-fold symmetrical on binding to RuvC with unstacked arms; it has a different conformation from HJ DNA in complex with RuvA. In the full resolvosome a probable DNA-RuvA(4)-RuvB(12)-RuvC(2) complex forms which resolves the HJ. Requires Mg(2+) as cofactor.

It is found in the cytoplasm. The catalysed reaction is Endonucleolytic cleavage at a junction such as a reciprocal single-stranded crossover between two homologous DNA duplexes (Holliday junction).. In terms of biological role, the RuvA-RuvB-RuvC complex processes Holliday junction (HJ) DNA during genetic recombination and DNA repair. Endonuclease that resolves HJ intermediates. Cleaves cruciform DNA by making single-stranded nicks across the HJ at symmetrical positions within the homologous arms, yielding a 5'-phosphate and a 3'-hydroxyl group; requires a central core of homology in the junction. The consensus cleavage sequence is 5'-(A/T)TT(C/G)-3'. Cleavage occurs on the 3'-side of the TT dinucleotide at the point of strand exchange. HJ branch migration catalyzed by RuvA-RuvB allows RuvC to scan DNA until it finds its consensus sequence, where it cleaves and resolves the cruciform DNA. This chain is Crossover junction endodeoxyribonuclease RuvC, found in Actinobacillus pleuropneumoniae serotype 5b (strain L20).